The primary structure comprises 370 residues: DNA-directed RNA polymerase II subunit GRINL1A (370 aa).

Residues 1-20 (MSSLPRGFEPQTPEDLGQRS) are disordered. The stretch at 15–69 (DLGQRSLAELREMLKRQERLLRNVKFICKLPDKGKKISDAVTKLKAAIAEREEVR) forms a coiled coil. The interval 29 to 68 (KRQERLLRNVKFICKLPDKGKKISDAVTKLKAAIAEREEV) is important for transcription repressor activity. Disordered stretches follow at residues 93–172 (DGDR…ASEG), 204–226 (DPTE…WSGP), and 241–283 (KNPM…RRDR). Polar residues predominate over residues 101–131 (NSDQILDTSSPVPGCSSVANITSSQTTSRQQ). Residues 138-152 (RGGDAEAAEAEHTVS) are compositionally biased toward basic and acidic residues. A compositionally biased stretch (low complexity) spans 155–170 (PTSSSGAPAPSSSQAS). Residues 205–214 (PTEHHSEGNR) are compositionally biased toward basic and acidic residues. The segment at 228 to 299 (KKPHYMEVLE…TAARLLPLHH (72 aa)) is interaction with Pol II. The segment covering 254–266 (VLPSQPRDSSSAC) has biased composition (polar residues). Residue Ser271 is modified to Phosphoserine. The interval 300 to 315 (LPTQLLSIEESLALQR) is important for transcription repressor activity. The stretch at 303–328 (QLLSIEESLALQRQQKQSYEEIQAKL) forms a coiled coil. The tract at residues 316-341 (QQKQSYEEIQAKLAAQKLAERLNIKM) is interaction with Pol II. Positions 340-370 (KMQSYNPEGESSRKYREVRDEDDDQSSEDEF) are disordered. Positions 349–358 (ESSRKYREVR) are enriched in basic and acidic residues. The segment covering 359 to 370 (DEDDDQSSEDEF) has biased composition (acidic residues).

The protein belongs to the GRINL1 family. In terms of assembly, component of the Pol II(G) complex, which contains the RNA polymerase II (Pol II) core complex subunits and POLR2M and appears to be an abundant form of Pol II. In terms of processing, dephosphorylated at Ser-271 by the PNUTS-PP1 complex, promoting RNA polymerase II transcription pause-release.

It localises to the nucleus. Appears to be a stable component of the Pol II(G) complex form of RNA polymerase II (Pol II). Pol II synthesizes mRNA precursors and many functional non-coding RNAs and is the central component of the basal RNA polymerase II transcription machinery. May play a role in Mediator complex-dependent regulation of transcription activation. Acts in vitro as a negative regulator of transcriptional activation; this repression is relieved by the Mediator complex, which restores Pol II(G) activator-dependent transcription to a level equivalent to that of Pol II. This Bos taurus (Bovine) protein is DNA-directed RNA polymerase II subunit GRINL1A (POLR2M).